Consider the following 400-residue polypeptide: Phosphoglycerate kinase (400 aa).

Substrate-binding positions include 23 to 25 (DLN), arginine 38, 61 to 64 (HFGR), arginine 120, and arginine 153. Residues lysine 203, glutamate 325, and 355–358 (GGDT) each bind ATP.

The protein belongs to the phosphoglycerate kinase family. As to quaternary structure, monomer.

It localises to the cytoplasm. It catalyses the reaction (2R)-3-phosphoglycerate + ATP = (2R)-3-phospho-glyceroyl phosphate + ADP. The protein operates within carbohydrate degradation; glycolysis; pyruvate from D-glyceraldehyde 3-phosphate: step 2/5. This Allorhizobium ampelinum (strain ATCC BAA-846 / DSM 112012 / S4) (Agrobacterium vitis (strain S4)) protein is Phosphoglycerate kinase.